Reading from the N-terminus, the 466-residue chain is 3-isopropylmalate dehydratase large subunit (466 aa).

Residues C347, C407, and C410 each contribute to the [4Fe-4S] cluster site.

It belongs to the aconitase/IPM isomerase family. LeuC type 1 subfamily. As to quaternary structure, heterodimer of LeuC and LeuD. Requires [4Fe-4S] cluster as cofactor.

The enzyme catalyses (2R,3S)-3-isopropylmalate = (2S)-2-isopropylmalate. The protein operates within amino-acid biosynthesis; L-leucine biosynthesis; L-leucine from 3-methyl-2-oxobutanoate: step 2/4. In terms of biological role, catalyzes the isomerization between 2-isopropylmalate and 3-isopropylmalate, via the formation of 2-isopropylmaleate. This Escherichia coli (strain 55989 / EAEC) protein is 3-isopropylmalate dehydratase large subunit.